Here is a 103-residue protein sequence, read N- to C-terminus: Floral defensin-like protein 1 (103 aa).

An N-terminal signal peptide occupies residues 1–25; that stretch reads MARSICFFAVAILALMLFAAYDAEA. 5 disulfides stabilise this stretch: C28–C72, C32–C48, C39–C59, C45–C66, and C49–C68. Residues 73-103 constitute a propeptide, removed in mature form; sequence VFEKTEATQTETFTKDVNTLAEALLEADMMV.

It belongs to the DEFL family. In terms of processing, when compared to other plant defensins, the petunia defensins have an additional fifth disulfide bond. In terms of tissue distribution, petals.

The protein localises to the secreted. Its subcellular location is the vacuole. Functionally, plant defense peptide with antifungal activity against F.oxysporum and B.cinerea. This chain is Floral defensin-like protein 1 (D1), found in Petunia hybrida (Petunia).